We begin with the raw amino-acid sequence, 181 residues long: Cyclic phosphodiesterase (181 aa).

His42 serves as the catalytic Proton donor/acceptor. Thr44 is a binding site for substrate. 2 disulfide bridges follow: Cys64-Cys177 and Cys104-Cys110. His119 functions as the Proton donor/acceptor in the catalytic mechanism. Substrate contacts are provided by Ser121 and Tyr124.

Belongs to the 2H phosphoesterase superfamily. CPD1 family. As to expression, expressed in leaves, stems, roots, floral buds and germinating seeds.

The protein localises to the cytoplasm. It catalyses the reaction ADP-alpha-D-ribose 1'',2''-cyclic phosphate + H2O = ADP-alpha-D-ribose 1''-phosphate + H(+). It carries out the reaction 2',3'-cyclophospho-AMP + H2O = adenosine 2'-phosphate + H(+). The catalysed reaction is 2',3'-cyclophospho-GMP + H2O = guanosine 2'-phosphate + H(+). The enzyme catalyses 2',3'-cyclophospho-UMP + H2O = uridine 2'-phosphate + H(+). It catalyses the reaction 2',3'-cyclophospho-CMP + H2O = cytidine 2'-phosphate + H(+). With respect to regulation, inhibited by Cu(2+) and Zn(2+) at 0.5 mM by 93 and 87% respectively. Not inhibited by Ca(2+), Mg(2+), Co(2+), Ni(2+), and EDTA at 0.5 mM. In terms of biological role, hydrolyzes ADP-ribose 1'',2''-cyclic phosphate (Appr&gt;1) that is produced during tRNA splicing into ADP-ribose 1''-phosphate (Appr-1''p). Also acts on nucleoside 2',3'-cyclic phosphates. The polypeptide is Cyclic phosphodiesterase (Arabidopsis thaliana (Mouse-ear cress)).